Consider the following 92-residue polypeptide: Acyl-CoA-binding protein (92 aa).

The 86-residue stretch at 3 to 88 (LKEDFEEHAE…VKQLLEAEAS (86 aa)) folds into the ACB domain. An acyl-CoA-binding positions include 30 to 34 (YGLYK), Lys56, and Tyr75.

It belongs to the ACBP family.

Functionally, binds medium- and long-chain acyl-CoA esters with very high affinity and may function as an intracellular carrier of acyl-CoA esters. In Brassica napus (Rape), this protein is Acyl-CoA-binding protein.